The chain runs to 307 residues: Aspartate carbamoyltransferase catalytic subunit (307 aa).

Carbamoyl phosphate contacts are provided by Arg54 and Thr55. Lys83 contributes to the L-aspartate binding site. Carbamoyl phosphate contacts are provided by Arg104, His132, and Gln135. Positions 165 and 228 each coordinate L-aspartate. Carbamoyl phosphate contacts are provided by Leu267 and Pro268.

It belongs to the aspartate/ornithine carbamoyltransferase superfamily. ATCase family. In terms of assembly, heterododecamer (2C3:3R2) of six catalytic PyrB chains organized as two trimers (C3), and six regulatory PyrI chains organized as three dimers (R2).

The enzyme catalyses carbamoyl phosphate + L-aspartate = N-carbamoyl-L-aspartate + phosphate + H(+). It functions in the pathway pyrimidine metabolism; UMP biosynthesis via de novo pathway; (S)-dihydroorotate from bicarbonate: step 2/3. In terms of biological role, catalyzes the condensation of carbamoyl phosphate and aspartate to form carbamoyl aspartate and inorganic phosphate, the committed step in the de novo pyrimidine nucleotide biosynthesis pathway. The protein is Aspartate carbamoyltransferase catalytic subunit of Clostridium perfringens (strain 13 / Type A).